The following is an 828-amino-acid chain: MNSDQDVALKLAQERAEIVAKYDRGREGAEIEPWEDADYLVYKVTDRFGFLHEEELPDHNVAVERQKHLEIERTTKWLKMLKGWEKYKNTEKFHRRIYKGIPLQLRGEVWALLLEIPKMKEETRDLYSKLKHRARGCSPDIRQIDLDVNRTFRDHIMFRDRYGVKQQSLFHVLAAYSIYNTEVGYCQGMSQITALLLMYMNEEDAFWALVKLFSGPKHAMHGFFVQGFPKLLRFQEHHEKILNKFLSKLKQHLDSQEIYTSFYTMKWFFQCFLDRTPFTLNLRIWDIYIFEGERVLTAMSYTILKLHKKHLMKLSMEELVEFFQETLAKDFFFEDDFVIEQLQISMTELKRAKLDLPEPGKEDEYPKKPLGQLPPELQSWGVHHLSNGQRSVGRPSPLASGRRESGAPHRRHEHSPHPQSRTGTPERAQPPRRKSVEEESKKLKDEADFQRKLPSGPQDSSRQYNHAAANQNSNATSNIRKEFVPKWNKPSDVSATERTAKYTMEGKGRAAHPALAVTVPGPAEVRVSNVRPKMKALDAEDGKRGSTASQYDNVPGPELDSGASVEEALERAYSQSPRHALYPPSPRKHAEPSSSPSKVSNKFTFKVQPPSHARYPSQLDGEARGLAHPPSYSNPPVYHGNSPKHFPTANSSFASPQFSPGTQLNPSRRPHGSTLSVSASPEKSYSRPSPLVLPSSRIEVLPVDTGAGGYSGNSGSPKNGKLIIPPVDYLPDNRTWSEVSYTYRPETQGQSWTRDASRGNLPKYSAFQLAPFQDHGLPAVSVDSPVRYKASPAAEDASPSGYPYSGPPPPAYHYRNRDGLSIQESVLL.

M1 bears the N-acetylmethionine mark. Residues 100-292 (GIPLQLRGEV…RIWDIYIFEG (193 aa)) enclose the Rab-GAP TBC domain. Over residues 355 to 367 (DLPEPGKEDEYPK) the composition is skewed to basic and acidic residues. The disordered stretch occupies residues 355-722 (DLPEPGKEDE…NSGSPKNGKL (368 aa)). Phosphoserine occurs at positions 391, 396, and 400. Basic and acidic residues predominate over residues 434 to 451 (KSVEEESKKLKDEADFQR). Residues 465–478 (NHAAANQNSNATSN) show a composition bias toward low complexity. 2 stretches are compositionally biased toward basic and acidic residues: residues 498–508 (RTAKYTMEGKG) and 535–544 (KALDAEDGKR). A phosphoserine mark is found at S546 and S549. Phosphotyrosine is present on Y582. S585 carries the post-translational modification Phosphoserine. The span at 592–603 (PSSSPSKVSNKF) shows a compositional bias: polar residues. A phosphoserine mark is found at S642, S655, S659, S676, and S680. 2 stretches are compositionally biased toward polar residues: residues 648-666 (TANSSFASPQFSPGTQLNP) and 673-683 (STLSVSASPEK). Positions 686–697 (SRPSPLVLPSSR) are enriched in low complexity. At S716 the chain carries Phosphoserine. Position 729 is a phosphotyrosine (Y729). Residues 789 to 817 (KASPAAEDASPSGYPYSGPPPPAYHYRNR) are disordered.

Interacts with EPS8. Widely expressed.

It is found in the golgi apparatus. The protein localises to the cytoplasmic vesicle. Acts as a GTPase-activating protein for RAB5A and RAB43. Involved in receptor trafficking. In complex with EPS8 inhibits internalization of EGFR. Involved in retrograde transport from the endocytic pathway to the Golgi apparatus. Involved in the transport of Shiga toxin from early and recycling endosomes to the trans-Golgi network. Required for structural integrity of the Golgi complex. The sequence is that of USP6 N-terminal-like protein (USP6NL) from Homo sapiens (Human).